Reading from the N-terminus, the 179-residue chain is Large ribosomal subunit protein uL6 (179 aa).

Belongs to the universal ribosomal protein uL6 family. As to quaternary structure, part of the 50S ribosomal subunit.

Functionally, this protein binds to the 23S rRNA, and is important in its secondary structure. It is located near the subunit interface in the base of the L7/L12 stalk, and near the tRNA binding site of the peptidyltransferase center. The protein is Large ribosomal subunit protein uL6 of Gemmatimonas aurantiaca (strain DSM 14586 / JCM 11422 / NBRC 100505 / T-27).